Reading from the N-terminus, the 548-residue chain is Chaperonin GroEL (548 aa).

Residues 30 to 33 (TLGP), lysine 51, 87 to 91 (DGTTT), glycine 415, 479 to 481 (NAA), and aspartate 495 contribute to the ATP site. Residues 524-548 (LPKEDKSSDSNSSPAGGMGGMGGMM) form a disordered region. Residues 539-548 (GGMGGMGGMM) are compositionally biased toward gly residues.

It belongs to the chaperonin (HSP60) family. In terms of assembly, forms a cylinder of 14 subunits composed of two heptameric rings stacked back-to-back. Interacts with the co-chaperonin GroES.

The protein localises to the cytoplasm. It carries out the reaction ATP + H2O + a folded polypeptide = ADP + phosphate + an unfolded polypeptide.. Functionally, together with its co-chaperonin GroES, plays an essential role in assisting protein folding. The GroEL-GroES system forms a nano-cage that allows encapsulation of the non-native substrate proteins and provides a physical environment optimized to promote and accelerate protein folding. The protein is Chaperonin GroEL of Buchnera aphidicola subsp. Myzus persicae (Myzus persicae primary endosymbiont).